The following is a 293-amino-acid chain: 33 kDa chaperonin (293 aa).

Disulfide bonds link C238–C240 and C271–C274.

Belongs to the HSP33 family. In terms of processing, under oxidizing conditions two disulfide bonds are formed involving the reactive cysteines. Under reducing conditions zinc is bound to the reactive cysteines and the protein is inactive.

It is found in the cytoplasm. Its function is as follows. Redox regulated molecular chaperone. Protects both thermally unfolding and oxidatively damaged proteins from irreversible aggregation. Plays an important role in the bacterial defense system toward oxidative stress. The polypeptide is 33 kDa chaperonin (Staphylococcus aureus (strain USA300)).